Here is an 872-residue protein sequence, read N- to C-terminus: Protein SEY1 (872 aa).

At 1 to 749 the chain is on the cytoplasmic side; it reads MVANGHFAGV…KRSAIGGITQ (749 aa). In terms of domain architecture, GB1/RHD3-type G spans 49–294; it reads GFNYHLISVF…IEGGIFLPEY (246 aa). Residue 59–66 coordinates GTP; sequence GSQSTGKS. Residues 482 to 504 are a coiled coil; sequence SNYQQELSLYQKDLENIGGQLRR. A disordered region spans residues 676–704; it reads LDKWIGHTPSSATPADEEDLTPIGGVDED. Residues 690 to 704 show a composition bias toward acidic residues; sequence ADEEDLTPIGGVDED. Residues 750–770 form a helical membrane-spanning segment; it reads VPLYFYGLLLALGWNEIVAVL. Residues 771–773 are Lumenal-facing; it reads RNP. The helical transmembrane segment at 774–794 threads the bilayer; sequence AYFLLLFVCAVTAYVTYQLNL. At 795–872 the chain is on the cytoplasmic side; it reads WGPIIKMTEA…IDDADDDDDF (78 aa). A disordered region spans residues 849–872; that stretch reads NRKSAGGFQNNRSHIDDADDDDDF.

Belongs to the TRAFAC class dynamin-like GTPase superfamily. GB1/RHD3 GTPase family. RHD3 subfamily.

The protein resides in the endoplasmic reticulum membrane. In terms of biological role, cooperates with the reticulon proteins and tubule-shaping DP1 family proteins to generate and maintain the structure of the tubular endoplasmic reticulum network. Has GTPase activity, which is required for its function in ER organization. The chain is Protein SEY1 from Paracoccidioides brasiliensis (strain Pb03).